We begin with the raw amino-acid sequence, 285 residues long: Bifunctional protein FolD (285 aa).

Residues G165–S167 and I232 contribute to the NADP(+) site.

Belongs to the tetrahydrofolate dehydrogenase/cyclohydrolase family. Homodimer.

It catalyses the reaction (6R)-5,10-methylene-5,6,7,8-tetrahydrofolate + NADP(+) = (6R)-5,10-methenyltetrahydrofolate + NADPH. It carries out the reaction (6R)-5,10-methenyltetrahydrofolate + H2O = (6R)-10-formyltetrahydrofolate + H(+). It functions in the pathway one-carbon metabolism; tetrahydrofolate interconversion. Catalyzes the oxidation of 5,10-methylenetetrahydrofolate to 5,10-methenyltetrahydrofolate and then the hydrolysis of 5,10-methenyltetrahydrofolate to 10-formyltetrahydrofolate. This chain is Bifunctional protein FolD, found in Sulfurihydrogenibium sp. (strain YO3AOP1).